A 124-amino-acid chain; its full sequence is Small ribosomal subunit protein bS6 (124 aa).

Residues 96 to 124 are disordered; the sequence is ETGPSPMMKEVQREEAKKAAAAQPAEAQA. Residues 114–124 are compositionally biased toward low complexity; that stretch reads AAAAQPAEAQA.

The protein belongs to the bacterial ribosomal protein bS6 family.

Functionally, binds together with bS18 to 16S ribosomal RNA. The chain is Small ribosomal subunit protein bS6 from Burkholderia orbicola (strain AU 1054).